Here is a 1577-residue protein sequence, read N- to C-terminus: Dynamin-binding protein (1577 aa).

Residue methionine 1 is modified to N-acetylmethionine. SH3 domains are found at residues 2-61 (EPGS…IVTI), 66-126 (EGER…ELCL), and 145-204 (YSMG…LLGP). The tract at residues 209–242 (DESVNAGSGDDSTLNDEVDVSPEEVESEGDEDDQ) is disordered. Residues 221–242 (TLNDEVDVSPEEVESEGDEDDQ) are compositionally biased toward acidic residues. The SH3 4 domain maps to 243–302 (QAGTYGIALYRFQALESNELDFEVGDKIRILGTLEDGWLEGRLKGKTGIFPHRFVKLCPS). 2 disordered regions span residues 307-361 (ETMA…EEPL) and 375-437 (GQDE…SRQC). The segment covering 400-410 (PDLSQEVNGIS) has biased composition (polar residues). A Phosphoserine modification is found at serine 494. Disordered regions lie at residues 519-547 (PERPKRRPGLPDKEPATEITPASQGDNLD) and 590-681 (RGSS…SEYT). Residues 617–626 (TPTSTSPHLL) are compositionally biased toward low complexity. Over residues 632 to 651 (KPGPPLVVRPSRPAPLPPPT) the composition is skewed to pro residues. Polar residues predominate over residues 652–662 (QQRLNTASPKP). Positions 672–681 (APEKEGSEYT) are enriched in basic and acidic residues. Serine 684 carries the post-translational modification Phosphoserine. Residues 705–755 (LDMHTRAQEELNLLLEEKQDESLRAETLETLKSYESTIQSLNLELQQLREM) are a coiled coil. Positions 784–967 (KRAKVVAELL…KEINANINEY (184 aa)) constitute a DH domain. Residues 1008 to 1217 (LKHLTGFAPQ…LKASDREGNL (210 aa)) form the BAR domain. Positions 1285 to 1348 (PPEKLFHVQR…YSSFLKPYNP (64 aa)) constitute an SH3 5 domain. Over residues 1353-1375 (SDSSVVSHSSTESEHSGSSPSFH) the composition is skewed to low complexity. Disordered regions lie at residues 1353 to 1381 (SDSSVVSHSSTESEHSGSSPSFHRQNSSS) and 1415 to 1510 (ETLG…LGSS). 2 stretches are compositionally biased toward polar residues: residues 1418 to 1428 (GVSSNTGNPET) and 1484 to 1497 (DQGSDSIKGTSRAC). One can recognise an SH3 6 domain in the interval 1513 to 1576 (EGNQVYFAIY…PSNYIRKTEY (64 aa)).

In terms of assembly, binds DNM1 via its N-terminal SH3 domains. The C-terminal SH3 domain binds a complex containing actin, tubulin, Hsp70 and actin-regulatory proteins, such as ENAH, EVL, WIRE, CR16, WAVE1 and NAP1L1. Interacts with FASLG. Interacts (via SH3 domain 6) with WASL. Interacts (via SH3 domain 6) interacts with ENAH. Interacts (via C-terminal domain) with TJP1; required for the apical cell-cell junction localization of DNMBP. In terms of tissue distribution, widely expressed.

It is found in the cytoplasm. The protein localises to the golgi apparatus. It localises to the golgi stack. The protein resides in the cytoskeleton. Its subcellular location is the synapse. It is found in the cell junction. In terms of biological role, plays a critical role as a guanine nucleotide exchange factor (GEF) for CDC42 in several intracellular processes associated with the actin and microtubule cytoskeleton. Regulates the structure of apical junctions in epithelial cells. Participates in the normal lumenogenesis of epithelial cell cysts by regulating spindle orientation. Plays a role in ciliogenesis. May play a role in membrane trafficking between the cell surface and the Golgi. The sequence is that of Dynamin-binding protein from Rattus norvegicus (Rat).